Here is a 486-residue protein sequence, read N- to C-terminus: Corytuberine synthase (486 aa).

The chain crosses the membrane as a helical span at residues 6–21; that stretch reads ALFSLIPVILVFILLL. A heme-binding site is contributed by Cys428.

The protein belongs to the cytochrome P450 family. Requires heme as cofactor.

The protein resides in the endoplasmic reticulum membrane. The enzyme catalyses (S)-reticuline + reduced [NADPH--hemoprotein reductase] + O2 = (S)-corytuberine + oxidized [NADPH--hemoprotein reductase] + 2 H2O + 2 H(+). With respect to regulation, inhibited by ketoconazole. Cytochrome P450 that catalyzes an intramolecular C-C phenol coupling of (S)-reticuline in magnoflorine biosynthesis. Catalyzes the formation of (S)-corytuberine from (S)-reticuline, and also, with a lover efficiency, the 4'-O-demethylation of codamine to produce orientaline, and subsequent C-C-phenol coupling of orientaline. Can also use (R,S)-norreticuline, (R,S)-orientaline, (S)-N-methylcoclaurine and (S)-coclaurine as substrates, but not (R,S)-6-O-methyllaudanosoline, (R,S)-6-O-methylnorlaudanosoline, (R,S)-laudanine, (R,S)-norlaudanine, (R,S)-4'-O-methyllaudanosoline, (R,S)-pseudocodamine, (R,S)-norpseudocodamine, (R,S)-laudanosine, (R,S)-norlaudanosine, (R,S)-laudanosoline or (R,S)-norlaudanosoline. The polypeptide is Corytuberine synthase (Coptis japonica (Japanese goldthread)).